Here is a 264-residue protein sequence, read N- to C-terminus: Ferric siderophore reductase (264 aa).

In terms of domain architecture, FAD-binding FR-type spans 9 to 127 (SPTRLTYISD…PGPLKMNRFD (119 aa)). Positions 73, 74, 76, 90, 92, 96, 100, 101, 247, 249, 250, and 252 each coordinate FAD.

This sequence belongs to the SIP oxidoreductase family. Requires FAD as cofactor.

Functionally, ferric-siderophore reductase involved in iron removal from the siderophores after their transport into the cell. Catalyzes the reduction of the ferric iron bound to the hydroxamate siderophores produced by Shewanella to ferrous iron. Can use a ferredoxin as electron donor. Despite the clear evidence for the interaction with NAD(P)H, no direct reduction of the enzyme by these compounds is observed, nor consumption of NAD(P)H, suggesting that NADH and NADPH are not the physiological electron donors. This Shewanella frigidimarina (strain NCIMB 400) protein is Ferric siderophore reductase.